Here is an 82-residue protein sequence, read N- to C-terminus: Putative membrane protein insertion efficiency factor (82 aa).

The disordered stretch occupies residues 63 to 82 (PGGHDPVPESTILSKEKSVK).

This sequence belongs to the UPF0161 family.

Its subcellular location is the cell inner membrane. Could be involved in insertion of integral membrane proteins into the membrane. This chain is Putative membrane protein insertion efficiency factor, found in Protochlamydia amoebophila (strain UWE25).